Here is a 357-residue protein sequence, read N- to C-terminus: Transcription factor HHO1 (357 aa).

Disordered stretches follow at residues Thr-94–Ile-117 and Asn-171–Arg-198. The segment covering Ile-96–Glu-109 has biased composition (acidic residues). Over residues Asn-171–Asp-182 the composition is skewed to polar residues. The HTH myb-type domain maps to Gly-193–Arg-253. A DNA-binding region (H-T-H motif) is located at residues Pro-224–Arg-249.

The protein resides in the nucleus. Probable factor involved in nitrate and phosphate signaling in roots. Integrates nitrate and phosphate starvation responses and adaptation of root architecture, depending on nutrient availabilities. Acts downstream of the nitrate sensor and transporter NPF6.3/NRT1.1. Represses primary root development in response to phosphate deficiency conditions, only when nitrate is present. This Arabidopsis thaliana (Mouse-ear cress) protein is Transcription factor HHO1.